The sequence spans 176 residues: Probable superoxide oxidase CybB (176 aa).

4 consecutive transmembrane segments (helical) span residues 7-27, 44-64, 85-105, and 137-157; these read CLQI…WSSI, IHFS…LIQL, VGHW…IAIL, and HLLL…AALL. 2 residues coordinate heme b: His13 and His45. Residues His137 and His151 each coordinate heme b.

The protein belongs to the cytochrome b561 family. Heme b is required as a cofactor.

It is found in the cell inner membrane. The catalysed reaction is a ubiquinol + 2 O2 = 2 superoxide + a ubiquinone + 2 H(+). Functionally, B-type di-heme cytochrome. Catalyzes the oxidation of superoxide to molecular oxygen and transfers the extracted electrons to ubiquinone through the two hemes. This chain is Probable superoxide oxidase CybB (cybB), found in Yersinia pestis.